Here is a 163-residue protein sequence, read N- to C-terminus: MSDIILKGKVHKYGSNVNTDEIIPARYLNTTDPTILSKYCMEDIDKNFVKNVKAGDIIVAENNFGCGSSREHAPIAIKASGISAVIANSFARIFFRNSINIGLPILESQKAVKAIENGDAVEINLTKGIIKNITKNESYQSQPFPEFMQKVIKSGGLLGYIKS.

Belongs to the LeuD family. LeuD type 2 subfamily. As to quaternary structure, heterodimer of LeuC and LeuD.

It catalyses the reaction (2R,3S)-3-isopropylmalate = (2S)-2-isopropylmalate. Its pathway is amino-acid biosynthesis; L-leucine biosynthesis; L-leucine from 3-methyl-2-oxobutanoate: step 2/4. Its function is as follows. Catalyzes the isomerization between 2-isopropylmalate and 3-isopropylmalate, via the formation of 2-isopropylmaleate. In Endomicrobium trichonymphae, this protein is 3-isopropylmalate dehydratase small subunit.